Here is a 510-residue protein sequence, read N- to C-terminus: MSATPKPLVLIILDGFGHSDKPEYNAIHAASTPVYDRLRATYPHGLISGSGMDVGLPDGQMGNSEVGHMNLGAGRVVYQDFTRVTKAIRDGEFFDNAAINQAVDKAVAAGKAVHILGLLSDGGVHSHQDHIVAMAELAARRGAEKIYLHAFLDGRDTPPKSAQPSIELLDAAFARLGKGRIASLTGRYFAMDRDNRWDRVEQAYHLIVDGAGQFNAASAVEGLQAAYERGESDEFVKATTIGAPVQVEDGDAVVFMNFRADRARELTRAFVEPGFQEFERKRAPQVGFVMLTQYAASIPAPAAFAPEALTNVLGEYLAKNGKTQLRIAETEKYAHVTFFFSGGREEPFEGEERILIPSPDVATYDLKPEMSAPEVTDRIVDAIENQRYDVIIVNYANGDMVGHTGVFEAAVKAVETLDTCVGRITEALQKVGGEALITADHGNVEQMEDECTGQAHTAHTCEPVPFIYVGKRPARIREGGVLADVAPTLLTLMGLPQPAEMTGKTIVELE.

Mn(2+)-binding residues include Asp-14 and Ser-64. The active-site Phosphoserine intermediate is Ser-64. Substrate-binding positions include His-125, 155–156, Arg-187, Arg-193, 259–262, and Lys-332; these read RD and RADR. Mn(2+)-binding residues include Asp-399, His-403, Asp-440, His-441, and His-459.

This sequence belongs to the BPG-independent phosphoglycerate mutase family. As to quaternary structure, monomer. Requires Mn(2+) as cofactor.

It catalyses the reaction (2R)-2-phosphoglycerate = (2R)-3-phosphoglycerate. Its pathway is carbohydrate degradation; glycolysis; pyruvate from D-glyceraldehyde 3-phosphate: step 3/5. In terms of biological role, catalyzes the interconversion of 2-phosphoglycerate and 3-phosphoglycerate. The sequence is that of 2,3-bisphosphoglycerate-independent phosphoglycerate mutase from Ectopseudomonas mendocina (strain ymp) (Pseudomonas mendocina).